Here is a 548-residue protein sequence, read N- to C-terminus: Membrane protein insertase YidC (548 aa).

The chain crosses the membrane as a helical span at residues 6 to 26; that stretch reads NLLVIALLFVSFMIWQAWEQD. The interval 28-55 is disordered; sequence NPQPQAQQTTQTTTTAAGSAADQGVPAS. Over residues 30–50 the composition is skewed to low complexity; that stretch reads QPQAQQTTQTTTTAAGSAADQ. 4 helical membrane-spanning segments follow: residues 350–370, 420–440, 458–478, and 499–519; these read FVGN…GIMY, LGGC…YYML, LSAQ…MFFI, and PVIF…YYIV.

The protein belongs to the OXA1/ALB3/YidC family. Type 1 subfamily. Interacts with the Sec translocase complex via SecD. Specifically interacts with transmembrane segments of nascent integral membrane proteins during membrane integration.

The protein localises to the cell inner membrane. In terms of biological role, required for the insertion and/or proper folding and/or complex formation of integral membrane proteins into the membrane. Involved in integration of membrane proteins that insert both dependently and independently of the Sec translocase complex, as well as at least some lipoproteins. Aids folding of multispanning membrane proteins. The sequence is that of Membrane protein insertase YidC from Shigella boydii serotype 18 (strain CDC 3083-94 / BS512).